A 286-amino-acid chain; its full sequence is uncharacterized protein (286 aa).

6 helical membrane passes run 52 to 74 (ILWT…LIGL), 79 to 101 (LIAI…FLFL), 142 to 161 (WWDP…VSFF), 168 to 190 (VLVF…GAIL), 203 to 225 (IQAT…VALV), and 257 to 276 (IIWI…ASFM).

Its subcellular location is the cell membrane. This is an uncharacterized protein from Archaeoglobus fulgidus (strain ATCC 49558 / DSM 4304 / JCM 9628 / NBRC 100126 / VC-16).